A 236-amino-acid chain; its full sequence is Ribonuclease PH (236 aa).

Phosphate-binding positions include Arg-86 and 124–126 (GTR).

This sequence belongs to the RNase PH family. Homohexameric ring arranged as a trimer of dimers.

The enzyme catalyses tRNA(n+1) + phosphate = tRNA(n) + a ribonucleoside 5'-diphosphate. Phosphorolytic 3'-5' exoribonuclease that plays an important role in tRNA 3'-end maturation. Removes nucleotide residues following the 3'-CCA terminus of tRNAs; can also add nucleotides to the ends of RNA molecules by using nucleoside diphosphates as substrates, but this may not be physiologically important. Probably plays a role in initiation of 16S rRNA degradation (leading to ribosome degradation) during starvation. This chain is Ribonuclease PH, found in Thermodesulfovibrio yellowstonii (strain ATCC 51303 / DSM 11347 / YP87).